A 325-amino-acid polypeptide reads, in one-letter code: Beta-ketoacyl-[acyl-carrier-protein] synthase III (325 aa).

Residues cysteine 116 and histidine 252 contribute to the active site. The tract at residues 253 to 257 (QANLR) is ACP-binding. Asparagine 282 is an active-site residue.

The protein belongs to the thiolase-like superfamily. FabH family. In terms of assembly, homodimer.

It localises to the cytoplasm. The catalysed reaction is malonyl-[ACP] + acetyl-CoA + H(+) = 3-oxobutanoyl-[ACP] + CO2 + CoA. It functions in the pathway lipid metabolism; fatty acid biosynthesis. In terms of biological role, catalyzes the condensation reaction of fatty acid synthesis by the addition to an acyl acceptor of two carbons from malonyl-ACP. Catalyzes the first condensation reaction which initiates fatty acid synthesis and may therefore play a role in governing the total rate of fatty acid production. Possesses both acetoacetyl-ACP synthase and acetyl transacylase activities. Its substrate specificity determines the biosynthesis of branched-chain and/or straight-chain of fatty acids. The protein is Beta-ketoacyl-[acyl-carrier-protein] synthase III of Xanthomonas oryzae pv. oryzae (strain MAFF 311018).